The following is a 278-amino-acid chain: Probable aquaporin PIP2-8 (278 aa).

The residue at position 1 (M1) is an N-acetylmethionine. Over 1–36 the chain is Cytoplasmic; the sequence is MSKEVSEEGRHGKDYVDPPPAPLLDMAELKLWSFYR. K3 carries the N6,N6-dimethyllysine modification. The chain crosses the membrane as a helical span at residues 37-57; that stretch reads AIIAEFIATLLFLYVTVATVI. At 58-74 the chain is on the extracellular side; the sequence is GHKNQTGPCGGVGLLGI. Residues 75–95 form a helical membrane-spanning segment; that stretch reads AWAFGGMIFVLVYCTAGISGG. Residues 96–116 are Cytoplasmic-facing; sequence HINPAVTFGLFLARKVSLPRA. The NPA 1 motif lies at 98–100; that stretch reads NPA. Residues 117–137 form a helical membrane-spanning segment; it reads VAYMVAQCLGAICGVGLVKAF. Residues 138-158 are Extracellular-facing; sequence MMTPYKRLGGGANTVADGYST. Residues 159 to 179 traverse the membrane as a helical segment; the sequence is GTALGAEIIGTFVLVYTVFSA. The Cytoplasmic portion of the chain corresponds to 180-192; it reads TDPKRSARDSHVP. A helical transmembrane segment spans residues 193 to 213; sequence VLAPLPIGFAVFMVHLATIPI. Over 214–240 the chain is Extracellular; the sequence is TGTGINPARSFGAAVIYNNEKAWDDHW. The NPA 2 signature appears at 219 to 221; sequence NPA. Residues 241-261 traverse the membrane as a helical segment; sequence IFWVGPFVGALAAAAYHQYIL. Residues 262-278 lie on the Cytoplasmic side of the membrane; sequence RAAAIKALASFRSNPTN. A phosphoserine mark is found at S271 and S274.

Belongs to the MIP/aquaporin (TC 1.A.8) family. PIP (TC 1.A.8.11) subfamily. In terms of tissue distribution, expressed in roots and floral buds.

The protein localises to the cell membrane. Functionally, aquaporins facilitate the transport of water and small neutral solutes across cell membranes. The sequence is that of Probable aquaporin PIP2-8 (PIP2-8) from Arabidopsis thaliana (Mouse-ear cress).